The primary structure comprises 467 residues: Zinc finger protein mex-6 (467 aa).

2 stretches are compositionally biased toward low complexity: residues 1–22 (MTATSNSAPLAGGSLSSSATAQ) and 179–195 (STTRTVPLTSSTPLPTS). Disordered stretches follow at residues 1 to 35 (MTATSNSAPLAGGSLSSSATAQPPQPPPGHQQQHP) and 163 to 209 (TNPQ…NRNS). Phosphothreonine is present on Thr-190. Residues 196-207 (REYETVQRDRNR) are compositionally biased toward basic and acidic residues. 2 C3H1-type zinc fingers span residues 273–302 (NFKTRLCMTHAAGINPCALGARCKFAHGLK) and 317–347 (KYKTKLCKNFARGGSGVCPYGLRCEFVHPSD). The tract at residues 425-451 (INENDLPPHLRRIRRGNPPVTRSRPSF) is disordered. The residue at position 457 (Ser-457) is a Phosphoserine.

Interacts (probably when phosphorylated on Thr-190) with plk-1 (via POLO box domain) and plk-2 (via POLO box domain). In terms of processing, phosphorylation on Ser-457 by par-1 promotes localization of the protein to the anterior cytoplasm of the zygote.

The protein localises to the cytoplasm. Functionally, functions with mex-5 to affect embryonic viability, establish soma germline asymmetry in embryos and establish plk-1, pie-1, mex-1, and pos-1 asymmetry in embryos. Also affects formation of intestinal cells. The polypeptide is Zinc finger protein mex-6 (mex-6) (Caenorhabditis elegans).